A 110-amino-acid polypeptide reads, in one-letter code: Large ribosomal subunit protein uL22 (110 aa).

The protein belongs to the universal ribosomal protein uL22 family. Part of the 50S ribosomal subunit.

In terms of biological role, this protein binds specifically to 23S rRNA; its binding is stimulated by other ribosomal proteins, e.g. L4, L17, and L20. It is important during the early stages of 50S assembly. It makes multiple contacts with different domains of the 23S rRNA in the assembled 50S subunit and ribosome. Functionally, the globular domain of the protein is located near the polypeptide exit tunnel on the outside of the subunit, while an extended beta-hairpin is found that lines the wall of the exit tunnel in the center of the 70S ribosome. The polypeptide is Large ribosomal subunit protein uL22 (Vibrio parahaemolyticus serotype O3:K6 (strain RIMD 2210633)).